Consider the following 571-residue polypeptide: Sulfite reductase [NADPH] hemoprotein beta-component (571 aa).

Residues Cys-435, Cys-441, Cys-480, and Cys-484 each contribute to the [4Fe-4S] cluster site. A siroheme-binding site is contributed by Cys-484.

This sequence belongs to the nitrite and sulfite reductase 4Fe-4S domain family. In terms of assembly, alpha(8)-beta(8). The alpha component is a flavoprotein, the beta component is a hemoprotein. Siroheme serves as cofactor. [4Fe-4S] cluster is required as a cofactor.

The catalysed reaction is hydrogen sulfide + 3 NADP(+) + 3 H2O = sulfite + 3 NADPH + 4 H(+). It functions in the pathway sulfur metabolism; hydrogen sulfide biosynthesis; hydrogen sulfide from sulfite (NADPH route): step 1/1. Component of the sulfite reductase complex that catalyzes the 6-electron reduction of sulfite to sulfide. This is one of several activities required for the biosynthesis of L-cysteine from sulfate. The protein is Sulfite reductase [NADPH] hemoprotein beta-component of Dickeya chrysanthemi (strain Ech1591) (Dickeya zeae (strain Ech1591)).